Consider the following 209-residue polypeptide: Lipopolysaccharide export system protein LptC (209 aa).

A helical transmembrane segment spans residues 7–26; the sequence is NIRWNVILGVIALCALAWFY.

The protein belongs to the LptC family. Component of the lipopolysaccharide transport and assembly complex. Interacts with LptA and the LptBFG transporter complex.

The protein localises to the cell inner membrane. In terms of biological role, involved in the assembly of lipopolysaccharide (LPS). Required for the translocation of LPS from the inner membrane to the outer membrane. Facilitates the transfer of LPS from the inner membrane to the periplasmic protein LptA. Could be a docking site for LptA. The sequence is that of Lipopolysaccharide export system protein LptC from Haemophilus influenzae (strain ATCC 51907 / DSM 11121 / KW20 / Rd).